We begin with the raw amino-acid sequence, 464 residues long: Protein transport protein HofB homolog (464 aa).

264–271 provides a ligand contact to ATP; that stretch reads GPTGSGKS.

Belongs to the GSP E family.

This chain is Protein transport protein HofB homolog (hofB), found in Haemophilus influenzae (strain ATCC 51907 / DSM 11121 / KW20 / Rd).